The sequence spans 149 residues: Large ribosomal subunit protein eL19 (149 aa).

The segment at 45–94 (VADGTIDAEDTQGNSRGRARERDAKESYGHKKGAGSRKGKAGARQNEKRE) is disordered. Residues 62–73 (RARERDAKESYG) show a composition bias toward basic and acidic residues. Over residues 74-85 (HKKGAGSRKGKA) the composition is skewed to basic residues.

Belongs to the eukaryotic ribosomal protein eL19 family. Part of the 50S ribosomal subunit.

Binds to the 23S rRNA. The chain is Large ribosomal subunit protein eL19 from Halobacterium salinarum (strain ATCC 700922 / JCM 11081 / NRC-1) (Halobacterium halobium).